Consider the following 212-residue polypeptide: HTH-type transcriptional regulatory protein RaaS (212 aa).

An HTH tetR-type domain is found at 6-65 (LTAHARIREAAIEQFGRHGFGVGLRAIAEAAGVSAALVIHHFGSKEGLRKACDDFVAEEI). A DNA-binding region (H-T-H motif) is located at residues 28 to 47 (GLRAIAEAAGVSAALVIHHF).

As to quaternary structure, homodimer. Interacts with long chain acyl-CoA derivatives. Interacts with several drugs such rhodamine 6G, ethidium and safranin O.

Its activity is regulated as follows. Interaction with long chain acyl-CoA derivatives (oleoyl-CoA and, to lesser extent, stearoyl-CoA) prevents binding to DNA, leading to the expression of the target genes. Long chain acyl-CoA derivatives may serve as biological indicators of the bacterial metabolic state. Its function is as follows. Regulates the expression of the Rv1217c-Rv1218c multidrug efflux system and its own expression. Acts by binding to promoter regions of Rv1219c and upstream of the Rv1218c gene. Important for survival in prolonged stationary phase and during macrophage infection. May be used to eliminate non-growing mycobacteria. This Mycobacterium tuberculosis (strain ATCC 25618 / H37Rv) protein is HTH-type transcriptional regulatory protein RaaS.